We begin with the raw amino-acid sequence, 339 residues long: Annexin A2 (339 aa).

Ser2 bears the N-acetylserine mark. Residues 2 to 24 form an S100A10-binding site region; that stretch reads STVHEILCKLSLEGDHSTPPSAY. Tyr24 is subject to Phosphotyrosine; by SRC. Ser26 bears the Phosphoserine; by PKC mark. Annexin repeat units follow at residues 33 to 104 and 105 to 176; these read FDAE…GLLK and TPAQ…ALAK. The residue at position 49 (Lys49) is an N6-acetyllysine; alternate. Residue Lys49 forms a Glycyl lysine isopeptide (Lys-Gly) (interchain with G-Cter in SUMO1); alternate linkage. Residue Lys49 forms a Glycyl lysine isopeptide (Lys-Gly) (interchain with G-Cter in SUMO2); alternate linkage. The residue at position 152 (Lys152) is an N6-acetyllysine. Ser184 carries the phosphoserine modification. 2 Annexin repeats span residues 189–261 and 265–336; these read ELID…NLVQ and NKPL…YLCG. Tyr199 bears the Phosphotyrosine mark. An N6-acetyllysine modification is found at Lys227.

This sequence belongs to the annexin family. As to quaternary structure, heterotetramer containing 2 light chains of S100A10/p11 and 2 heavy chains of ANXA2/p36. Interacts with ATP1B1. Interacts with DYSF. Interacts with COCH. Interacts (via repeat Annexin 1) with PCSK9 (via the C-terminal domain); the interaction inhibits the degradation of LDLR. Interacts with CEACAM1 (via the cytoplasmic domain); this interaction is regulated by phosphorylation of CEACAM1. Interacts with APPL2 and APPL1; targets APPL2 to endosomes and acting in parallel to RAB5A. Interacts with S100A4. May interact with UBAP2. Interacts with PLEKHG4B; this interaction is required for PLEKHG4B localization to cell-cell adhesions. Interacts with FAM13A. Interacts with salivary cystatin-L2 (via loop 2) from the tick Ixodes scapularis; the interaction results in reduced activation of mouse NLRC4 inflammasome formation upon Anaplasma phagocytophilum infection. ISGylated.

The protein resides in the secreted. Its subcellular location is the extracellular space. It localises to the extracellular matrix. It is found in the basement membrane. The protein localises to the melanosome. The protein resides in the early endosome. In terms of biological role, calcium-regulated membrane-binding protein whose affinity for calcium is greatly enhanced by anionic phospholipids. It binds two calcium ions with high affinity. May be involved in heat-stress response. Inhibits PCSK9-enhanced LDLR degradation, probably reduces PCSK9 protein levels via a translational mechanism but also competes with LDLR for binding with PCSK9. Binds to endosomes damaged by phagocytosis of particulate wear debris and participates in endosomal membrane stabilization, thereby limiting NLRP3 inflammasome activation. Required for endothelial cell surface plasmin generation and may support fibrinolytic surveillance and neoangiogenesis. Its function is as follows. (Microbial infection) Regulates the formation of the NLRC4 inflammasome triggered by Anaplasma phagocytophilum infection. (Microbial infection) Protects against Klebsiella pneumoniae infection. Attenuates bacteria-induced pulmonary inflammation and promotes intro-abdominal pathogen clearance. Promotes anti-inflammatory responses by facilitating TLR4 internalization and translocation into early endosomal membranes; this leads to activation of TRAM-dependent endosomal signaling and release of anti-inflammatory cytokines. Functionally, (Microbial infection) Promotes macrophage phagocytic efficiency towards Cryptococcus neoformans and ability to control fungal infection inside the cells. In terms of biological role, (Microbial infection) Contributes to protection against Pseudomonas aeruginosa infection by regulating autophagy via the AKT1-mTOR-ULK1/2 signaling pathway and activation of Rho GTPases via FAM13A-mediated mechanism. This chain is Annexin A2 (Anxa2), found in Mus musculus (Mouse).